Here is a 234-residue protein sequence, read N- to C-terminus: Probable RNA/DNA demethylase ALKBH6 (234 aa).

In terms of domain architecture, Fe2OG dioxygenase spans 96–222 (TANHVLVNEY…RVSLTIRHVP (127 aa)). The 2-oxoglutarate site is built by Asn103 and Tyr105. The Fe cation site is built by His114, Asp116, and His180. Positions 213 and 215 each coordinate 2-oxoglutarate.

The protein belongs to the alkB family. Requires Fe(2+) as cofactor.

Its subcellular location is the cytoplasm. The protein resides in the nucleus. Its function is as follows. Probable Fe(2+)/2-oxoglutarate-dependent dioxygenase involved in oxidative demethylation of nucleic acids. Binds nucleic acids with a preference for ssDNA or ssRNA to other types of DNAs. May play a role in nucleic acid damage repair. The polypeptide is Probable RNA/DNA demethylase ALKBH6 (alkbh6) (Danio rerio (Zebrafish)).